A 701-amino-acid polypeptide reads, in one-letter code: Low-density lipoprotein receptor-related protein 12 (701 aa).

Topologically, residues 1–334 (GKSEEPNCAC…ENCPVIVPTR (334 aa)) are extracellular. 2 LDL-receptor class A domains span residues 7–43 (NCAC…EICA) and 56–97 (PCAY…IDCD). Intrachain disulfides connect Cys8–Cys20, Cys15–Cys33, Cys27–Cys42, Cys57–Cys74, Cys64–Cys87, Cys81–Cys96, and Cys101–Cys127. Residues 101-214 (CGQWLKYFYG…RGFNATYQVD (114 aa)) enclose the CUB domain. Asn126 and Asn208 each carry an N-linked (GlcNAc...) asparagine glycan. LDL-receptor class A domains follow at residues 216-253 (FCLP…INCT), 254-291 (MCQK…KNCF), and 292-328 (FCQP…ENCP). Intrachain disulfides connect Cys217–Cys230, Cys224–Cys243, Cys237–Cys252, Cys255–Cys268, Cys262–Cys281, Cys275–Cys290, Cys293–Cys305, Cys300–Cys318, and Cys312–Cys327. N-linked (GlcNAc...) asparagine glycosylation occurs at Asn251. Asn283 carries N-linked (GlcNAc...) asparagine glycosylation. Residues 335-355 (VITAAVIGSLICGLLLVIALG) form a helical membrane-spanning segment. Residues 356 to 701 (CTCKLYSLRM…TSDDEALLLC (346 aa)) are Cytoplasmic-facing. Disordered regions lie at residues 465–520 (ADGD…LPQK), 535–565 (ASSS…SPAR), 590–612 (SSVS…REDD), and 643–665 (DQGQ…SNRD). 2 stretches are compositionally biased toward polar residues: residues 590 to 599 (SSVSQNQSPL) and 643 to 656 (DQGQ…SATN).

The protein belongs to the LDLR family. As to quaternary structure, may interact with RACK1, ZFYVE9 and NMRK2.

It localises to the membrane. It is found in the coated pit. Probable receptor, which may be involved in the internalization of lipophilic molecules and/or signal transduction. May act as a tumor suppressor. In Macaca fascicularis (Crab-eating macaque), this protein is Low-density lipoprotein receptor-related protein 12 (LRP12).